The sequence spans 130 residues: Small ribosomal subunit protein uS11 (130 aa).

The protein belongs to the universal ribosomal protein uS11 family. In terms of assembly, part of the 30S ribosomal subunit. Interacts with proteins S7 and S18. Binds to IF-3.

Located on the platform of the 30S subunit, it bridges several disparate RNA helices of the 16S rRNA. Forms part of the Shine-Dalgarno cleft in the 70S ribosome. In Prochlorococcus marinus (strain MIT 9303), this protein is Small ribosomal subunit protein uS11.